Reading from the N-terminus, the 143-residue chain is Nucleoside diphosphate kinase (143 aa).

The ATP site is built by Lys-11, Phe-59, Arg-87, Thr-93, Arg-104, and Asn-114. Catalysis depends on His-117, which acts as the Pros-phosphohistidine intermediate.

It belongs to the NDK family. Homotetramer. The cofactor is Mg(2+).

The protein localises to the cytoplasm. It carries out the reaction a 2'-deoxyribonucleoside 5'-diphosphate + ATP = a 2'-deoxyribonucleoside 5'-triphosphate + ADP. The catalysed reaction is a ribonucleoside 5'-diphosphate + ATP = a ribonucleoside 5'-triphosphate + ADP. In terms of biological role, major role in the synthesis of nucleoside triphosphates other than ATP. The ATP gamma phosphate is transferred to the NDP beta phosphate via a ping-pong mechanism, using a phosphorylated active-site intermediate. This chain is Nucleoside diphosphate kinase, found in Shewanella halifaxensis (strain HAW-EB4).